A 203-amino-acid chain; its full sequence is Small ribosomal subunit protein uS4 (203 aa).

The tract at residues 1-46 is disordered; it reads MSKRQSAKYKLDRRMGENIWGRPKSPVNRREYGPGQHGQRRKGKMS. The region spanning 94–157 is the S4 RNA-binding domain; that stretch reads RRLDAVVYRA…QEMALVAEAQ (64 aa).

This sequence belongs to the universal ribosomal protein uS4 family. As to quaternary structure, part of the 30S ribosomal subunit. Contacts protein S5. The interaction surface between S4 and S5 is involved in control of translational fidelity.

One of the primary rRNA binding proteins, it binds directly to 16S rRNA where it nucleates assembly of the body of the 30S subunit. Its function is as follows. With S5 and S12 plays an important role in translational accuracy. This is Small ribosomal subunit protein uS4 from Sphingopyxis alaskensis (strain DSM 13593 / LMG 18877 / RB2256) (Sphingomonas alaskensis).